A 435-amino-acid polypeptide reads, in one-letter code: Adenylosuccinate synthetase (435 aa).

GTP contacts are provided by residues 13-19 (GDEGKGK) and 41-43 (GHT). Catalysis depends on Asp14, which acts as the Proton acceptor. Mg(2+) is bound by residues Asp14 and Gly41. IMP is bound by residues 14–17 (DEGK), 39–42 (NAGH), Thr130, Arg144, Gln225, Thr240, and Arg304. The active-site Proton donor is His42. Residue 300-306 (ATTGRPR) participates in substrate binding. GTP contacts are provided by residues Arg306, 332–334 (KLD), and 419–421 (STG).

This sequence belongs to the adenylosuccinate synthetase family. As to quaternary structure, homodimer. Mg(2+) serves as cofactor.

The protein localises to the cytoplasm. It carries out the reaction IMP + L-aspartate + GTP = N(6)-(1,2-dicarboxyethyl)-AMP + GDP + phosphate + 2 H(+). Its pathway is purine metabolism; AMP biosynthesis via de novo pathway; AMP from IMP: step 1/2. In terms of biological role, plays an important role in the de novo pathway of purine nucleotide biosynthesis. Catalyzes the first committed step in the biosynthesis of AMP from IMP. The polypeptide is Adenylosuccinate synthetase (Nitrosospira multiformis (strain ATCC 25196 / NCIMB 11849 / C 71)).